Reading from the N-terminus, the 373-residue chain is Probable pectin lyase D (373 aa).

Positions 1–24 (MKYAAALTAVAALAARAAAVGVSG) are cleaved as a signal peptide. Cystine bridges form between C82–C101 and C91–C225. A glycan (N-linked (GlcNAc...) asparagine) is linked at N128. The active site involves R255. The N-linked (GlcNAc...) asparagine glycan is linked to N274. C321 and C329 are joined by a disulfide. Residue N348 is glycosylated (N-linked (GlcNAc...) asparagine). A compositionally biased stretch (low complexity) spans 354-366 (LPSADAASTSPAS). The interval 354–373 (LPSADAASTSPASNAGQGNL) is disordered.

It belongs to the polysaccharide lyase 1 family.

The protein resides in the secreted. The catalysed reaction is Eliminative cleavage of (1-&gt;4)-alpha-D-galacturonan methyl ester to give oligosaccharides with 4-deoxy-6-O-methyl-alpha-D-galact-4-enuronosyl groups at their non-reducing ends.. Functionally, pectinolytic enzymes consist of four classes of enzymes: pectin lyase, polygalacturonase, pectin methylesterase and rhamnogalacturonase. Among pectinolytic enzymes, pectin lyase is the most important in depolymerization of pectin, since it cleaves internal glycosidic bonds of highly methylated pectins. The polypeptide is Probable pectin lyase D (pelD) (Aspergillus niger (strain ATCC MYA-4892 / CBS 513.88 / FGSC A1513)).